A 372-amino-acid chain; its full sequence is Adaptive-response sensory kinase SasA (372 aa).

Positions 147 to 360 constitute a Histidine kinase domain; the sequence is MVAHELRTPL…CFHFTVPVWQ (214 aa). H150 is subject to Phosphohistidine; by autocatalysis.

In terms of assembly, homooligomerizes. Interacts with KaiC. Participates in the KaiBC complex, whose core is composed of a KaiC homohexamer and 6 KaiB.

It catalyses the reaction ATP + protein L-histidine = ADP + protein N-phospho-L-histidine.. Member of the two-component regulatory system SasA/RpaA involved in genome-wide circadian gene expression. One of several clock output pathways. Participates in the Kai clock protein complex, the main circadian regulator in cyanobacteria, via its interaction with KaiC. KaiC enhances the autophosphorylation activity of SasA, which then transfers its phosphate group to RpaA to activate it. In addition to its output function, recruits fold-shifted KaiB (KaiB(fs)) to KaiC to cooperatively form the KaiB(6):KaiC(6) complex (independent of SasA kinase activity). Required for robustness of the circadian rhythm of gene expression and is involved in clock output, also required for adaptation to light/dark cycles. In Prochlorococcus marinus (strain AS9601), this protein is Adaptive-response sensory kinase SasA.